Here is a 126-residue protein sequence, read N- to C-terminus: Diadenosine hexaphosphate hydrolase (126 aa).

In terms of domain architecture, Nudix hydrolase spans 1 to 121 (MELGAGGVVF…EDLGLLEVAL (121 aa)). Substrate is bound by residues 21 to 23 (DRM) and 30 to 32 (KGH). A Nudix box motif is present at residues 31–52 (GHPEPGESLEEAAVREVWEETG). 2 residues coordinate Mg(2+): Glu-46 and Glu-50. Substrate contacts are provided by residues 66-68 (YVN), Arg-74, and Glu-112.

This sequence belongs to the Nudix hydrolase family. Monomer. Mg(2+) is required as a cofactor.

The enzyme catalyses P(1),P(6)-bis(5'-adenosyl) hexaphosphate + H2O = 2 ATP + 2 H(+). The catalysed reaction is P(1),P(5)-bis(5'-adenosyl) pentaphosphate + H2O = ADP + ATP + 2 H(+). It catalyses the reaction P(1),P(4)-bis(5'-adenosyl) tetraphosphate + H2O = AMP + ATP + 2 H(+). Its activity is regulated as follows. Strongly inhibited by fluoride ions. Functionally, specifically hydrolyzes (di)adenosine polyphosphates but not ATP or diadenosine triphosphate, generating ATP as the product. Diadenosine hexaphosphate (Ap6A) is the preferred substrate and hydrolysis yields 2 ATP. It is the only enzyme that symmetrically hydrolyzes Ap6A. It also hydrolyzes diadenosine pentaphosphate (Ap5A), diadenosine tetraphosphate (Ap4A) and adenosine tetraphosphate (p4A). This chain is Diadenosine hexaphosphate hydrolase, found in Thermus thermophilus.